We begin with the raw amino-acid sequence, 300 residues long: Ribonuclease HIII (300 aa).

In terms of domain architecture, RNase H type-2 spans 86 to 300 (RSRIGVDESG…FNEVLGSGNQ (215 aa)). A divalent metal cation is bound by residues Asp92, Glu93, and Asp196.

Belongs to the RNase HII family. RnhC subfamily. Mn(2+) serves as cofactor. It depends on Mg(2+) as a cofactor.

Its subcellular location is the cytoplasm. It carries out the reaction Endonucleolytic cleavage to 5'-phosphomonoester.. In terms of biological role, endonuclease that specifically degrades the RNA of RNA-DNA hybrids. The sequence is that of Ribonuclease HIII from Chlamydia trachomatis serovar A (strain ATCC VR-571B / DSM 19440 / HAR-13).